Consider the following 553-residue polypeptide: Putative transport protein YidE (553 aa).

5 helical membrane passes run 4–24, 28–48, 65–85, 95–115, and 158–178; these read IALT…IGNI, GVGF…HFVD, FGLI…FFAS, LFAV…HKIF, and MSYA…MWLM. RCK C-terminal domains are found at residues 192-276 and 279-361; these read KHES…VIGK and DTSL…VVGN. Helical transmembrane passes span 371-391, 393-413, 437-457, 464-484, 493-513, and 533-553; these read MLPV…PLFV, GFPV…ALIL, LGIV…FVDT, LSWI…IGLL, YLTL…LAFA, and LVMF…WGMG.

It belongs to the AAE transporter (TC 2.A.81) family. YidE subfamily.

The protein resides in the cell membrane. In Salmonella paratyphi C (strain RKS4594), this protein is Putative transport protein YidE.